The following is a 732-amino-acid chain: E3 ubiquitin-protein ligase DCST1 (732 aa).

Residues 1–46 (MAFLSSTLHSLGIFEKISRIKEVLKNRLLDLTKRRDQAREQQRKRP) are Cytoplasmic-facing. The chain crosses the membrane as a helical span at residues 47-67 (HTIIQGLLLWSLPVSWIRFLW). Topologically, residues 68–76 (RQPGEFPVT) are extracellular. The chain crosses the membrane as a helical span at residues 77–97 (AFLLGAGTGGLLAIGLFQLLV). Topologically, residues 98–107 (NPMNIYEEQK) are cytoplasmic. Residues 108–128 (VVALYCLASLGAIGWGTSPHI) traverse the membrane as a helical segment. Residues 129–394 (RCASLLLVPK…VRDYVRQQET (266 aa)) are Extracellular-facing. 4 N-linked (GlcNAc...) asparagine glycosylation sites follow: Asn-184, Asn-217, Asn-346, and Asn-374. Residues 395–415 (YLQWAMGLLHVLLSCTFLLVF) form a helical membrane-spanning segment. The Cytoplasmic segment spans residues 416-489 (HSAFSYMDHY…RYVIRELLET (74 aa)). Residues 490-510 (LPIVLLLLVLCAIDWALYSVF) traverse the membrane as a helical segment. At 511-576 (DTIRQHSFVQ…PQPISLNARD (66 aa)) the chain is on the extracellular side. A glycan (N-linked (GlcNAc...) asparagine) is linked at Asn-551. Residues 577 to 597 (YFKASLPTLLLVCLCLAQAFG) traverse the membrane as a helical segment. Topologically, residues 598-732 (YRLRRVIAAF…DSNDDAVYGD (135 aa)) are cytoplasmic. Residues 672 to 711 (CVVCQAMETPDSYVCPTPDCKALYCRSCWDDMQRLCPVCT) form an RING-type; degenerate zinc finger.

In terms of assembly, interacts with STAT2; the interaction results in STAT2 'Lys-48'-linked ubiquitination leading to its proteasomal degradation. Interacts with DCST2. In terms of tissue distribution, expressed in testis.

The protein resides in the cell membrane. Its subcellular location is the cytoplasmic vesicle. It is found in the secretory vesicle. It localises to the acrosome membrane. It carries out the reaction S-ubiquitinyl-[E2 ubiquitin-conjugating enzyme]-L-cysteine + [acceptor protein]-L-lysine = [E2 ubiquitin-conjugating enzyme]-L-cysteine + N(6)-ubiquitinyl-[acceptor protein]-L-lysine.. The protein operates within protein modification; protein ubiquitination. E3 ubiquitin-protein ligase which mediates 'Lys-48'-linked ubiquitination of STAT2 and induces its proteasomal degradation thereby negatively regulating type-I-interferon signaling. Its function is as follows. Essential sperm cell-surface protein required for sperm-egg fusion and fertilization. The polypeptide is E3 ubiquitin-protein ligase DCST1 (Dcst1) (Mus musculus (Mouse)).